Reading from the N-terminus, the 284-residue chain is Undecaprenyl-diphosphatase (284 aa).

8 helical membrane passes run 1 to 21, 43 to 63, 88 to 108, 116 to 136, 149 to 169, 193 to 213, 225 to 245, and 259 to 279; these read MNWLHAIILGIVEGITEFLPV, ITAFTAIIQVGAIIAAILYFW, YTLGWGIILGSIPVGVVGLVF, LSSLWVVAIALILWSGVMWLG, IGIVDAIVIGCFQALAPLFPG, LSFFMGIPALVAAGIYESVSA, VAIGWGPTILATVVSLIVAYV, and FTGFMWYRVVVGLIIIGLILS.

The protein belongs to the UppP family.

It localises to the cell membrane. The enzyme catalyses di-trans,octa-cis-undecaprenyl diphosphate + H2O = di-trans,octa-cis-undecaprenyl phosphate + phosphate + H(+). Functionally, catalyzes the dephosphorylation of undecaprenyl diphosphate (UPP). Confers resistance to bacitracin. This Cutibacterium acnes (strain DSM 16379 / KPA171202) (Propionibacterium acnes) protein is Undecaprenyl-diphosphatase.